Reading from the N-terminus, the 357-residue chain is Chorismate synthase (357 aa).

Arginine 46 is an NADP(+) binding site. FMN-binding positions include 123 to 125 (RSS), 235 to 236 (NA), glycine 275, 290 to 294 (KPTPS), and arginine 316.

This sequence belongs to the chorismate synthase family. Homotetramer. Requires FMNH2 as cofactor.

The enzyme catalyses 5-O-(1-carboxyvinyl)-3-phosphoshikimate = chorismate + phosphate. It functions in the pathway metabolic intermediate biosynthesis; chorismate biosynthesis; chorismate from D-erythrose 4-phosphate and phosphoenolpyruvate: step 7/7. Functionally, catalyzes the anti-1,4-elimination of the C-3 phosphate and the C-6 proR hydrogen from 5-enolpyruvylshikimate-3-phosphate (EPSP) to yield chorismate, which is the branch point compound that serves as the starting substrate for the three terminal pathways of aromatic amino acid biosynthesis. This reaction introduces a second double bond into the aromatic ring system. The chain is Chorismate synthase from Nitratiruptor sp. (strain SB155-2).